The chain runs to 396 residues: Elongation factor Tu (396 aa).

The tr-type G domain maps to 10–206 (KPHVNVGTIG…ALDTYIPTPE (197 aa)). The G1 stretch occupies residues 19–26 (GHVDHGKT). 19 to 26 (GHVDHGKT) contacts GTP. A Mg(2+)-binding site is contributed by T26. The interval 60 to 64 (GITIN) is G2. Residues 81–84 (DCPG) are G3. Residues 81 to 85 (DCPGH) and 136 to 139 (NKCD) contribute to the GTP site. The G4 stretch occupies residues 136–139 (NKCD). Residues 174 to 176 (SAK) form a G5 region.

This sequence belongs to the TRAFAC class translation factor GTPase superfamily. Classic translation factor GTPase family. EF-Tu/EF-1A subfamily. In terms of assembly, monomer.

It is found in the cytoplasm. The catalysed reaction is GTP + H2O = GDP + phosphate + H(+). In terms of biological role, GTP hydrolase that promotes the GTP-dependent binding of aminoacyl-tRNA to the A-site of ribosomes during protein biosynthesis. The sequence is that of Elongation factor Tu from Thiomonas delicata (Thiomonas cuprina).